Reading from the N-terminus, the 416-residue chain is Adenylosuccinate synthetase (416 aa).

Residues Gly12–Lys18 and Gly40–Thr42 contribute to the GTP site. Residue Asp13 is the Proton acceptor of the active site. Residues Asp13 and Gly40 each contribute to the Mg(2+) site. IMP is bound by residues Asp13–Lys16, Asn38–His41, Thr125, Arg139, Gln220, Thr235, and Arg299. The active-site Proton donor is the His41. Thr295–Arg301 serves as a coordination point for substrate. Residues Arg301, Lys327–Asp329, and Ser405–Ser407 each bind GTP.

It belongs to the adenylosuccinate synthetase family. As to quaternary structure, homodimer. The cofactor is Mg(2+).

Its subcellular location is the cytoplasm. It catalyses the reaction IMP + L-aspartate + GTP = N(6)-(1,2-dicarboxyethyl)-AMP + GDP + phosphate + 2 H(+). It functions in the pathway purine metabolism; AMP biosynthesis via de novo pathway; AMP from IMP: step 1/2. In terms of biological role, plays an important role in the de novo pathway of purine nucleotide biosynthesis. Catalyzes the first committed step in the biosynthesis of AMP from IMP. This Nitratiruptor sp. (strain SB155-2) protein is Adenylosuccinate synthetase.